The sequence spans 158 residues: 2-C-methyl-D-erythritol 2,4-cyclodiphosphate synthase (158 aa).

The a divalent metal cation site is built by aspartate 9 and histidine 11. 4-CDP-2-C-methyl-D-erythritol 2-phosphate contacts are provided by residues 9–11 (DVH) and 35–36 (HS). Histidine 43 contributes to the a divalent metal cation binding site. 4-CDP-2-C-methyl-D-erythritol 2-phosphate is bound by residues 57–59 (DIG), 62–66 (FPDTD), 101–107 (AQKPKMA), 133–136 (TTTE), phenylalanine 140, and arginine 143.

Belongs to the IspF family. As to quaternary structure, homotrimer. Requires a divalent metal cation as cofactor.

The catalysed reaction is 4-CDP-2-C-methyl-D-erythritol 2-phosphate = 2-C-methyl-D-erythritol 2,4-cyclic diphosphate + CMP. The protein operates within isoprenoid biosynthesis; isopentenyl diphosphate biosynthesis via DXP pathway; isopentenyl diphosphate from 1-deoxy-D-xylulose 5-phosphate: step 4/6. Functionally, involved in the biosynthesis of isopentenyl diphosphate (IPP) and dimethylallyl diphosphate (DMAPP), two major building blocks of isoprenoid compounds. Catalyzes the conversion of 4-diphosphocytidyl-2-C-methyl-D-erythritol 2-phosphate (CDP-ME2P) to 2-C-methyl-D-erythritol 2,4-cyclodiphosphate (ME-CPP) with a corresponding release of cytidine 5-monophosphate (CMP). The protein is 2-C-methyl-D-erythritol 2,4-cyclodiphosphate synthase of Bacillus velezensis (strain DSM 23117 / BGSC 10A6 / LMG 26770 / FZB42) (Bacillus amyloliquefaciens subsp. plantarum).